We begin with the raw amino-acid sequence, 112 residues long: Ribosomal processing cysteine protease Prp (112 aa).

Histidine 22 acts as the Proton donor in catalysis. Residue cysteine 34 is the Nucleophile of the active site.

Belongs to the Prp family. Homodimer.

Functionally, an essential cysteine protease that cleaves the N-terminus from ribosomal protein bL27. The chain is Ribosomal processing cysteine protease Prp from Bacillus subtilis (strain 168).